A 440-amino-acid chain; its full sequence is Transcription factor SOX-4 (440 aa).

The span at 1 to 10 (MVQQTNNAEN) shows a compositional bias: polar residues. Residues 1 to 58 (MVQQTNNAENTEALLAGESSDSGAGLELGIASSPTPGSTASTGGKADDPSWCKTPSGH) are disordered. The span at 31–44 (ASSPTPGSTASTGG) shows a compositional bias: low complexity. Positions 59–127 (IKRPMNAFMV…KHMADYPDYK (69 aa)) form a DNA-binding region, HMG box. The residue at position 95 (K95) is an N6-acetyllysine. Disordered regions lie at residues 128–211 (YRPR…AAAS), 234–258 (PSAA…HPAD), and 272–382 (ASAS…NFES). Composition is skewed to low complexity over residues 136–148 (SGNA…ATAK), 157–166 (AGSSGHAGSS), 234–253 (PSAA…ATPA), 304–322 (GRSL…ASRS), and 330–362 (ASLR…GSSS). Residues 363–372 (SDDEFEDDLL) show a composition bias toward acidic residues. Residues 373 to 382 (DLNPSSNFES) are compositionally biased toward low complexity. Residues 392 to 400 (SALDRDLDF) carry the 9aaTAD motif.

In terms of assembly, interacts with UBE2I. Interacts with HDAC1; interaction inhibits the transcriptional activator activity. Post-translationally, acetylation at Lys-95 by KAT5 promotes the transcription activator activity and is required during myoblast differentiation. Acetylation by KAT5 abolishes the interaction between SOX4 and HDAC1 and switches SOX4 into a transcriptional activator. Expressed in both gamma-delta T-cells and Cd4+ Cd8+ double-positive (DP) alpha-beta T-cells. Expressed in the ovaries and the thymus.

It is found in the nucleus. Functionally, transcriptional activator that binds with high affinity to the T-cell enhancer motif 5'-AACAAAG-3' motif. Required for IL17A-producing Vgamma2-positive gamma-delta T-cell maturation and development, via binding to regulator loci of RORC to modulate expression. Involved in skeletal myoblast differentiation by promoting gene expression of CALD1. In Mus musculus (Mouse), this protein is Transcription factor SOX-4.